The chain runs to 701 residues: Elongation factor G 1 (701 aa).

The tr-type G domain maps to 8-290 (VRYRNIGICA…AVVEYLPAPT (283 aa)). GTP-binding positions include 17–24 (AHVDAGKT), 88–92 (DTPGH), and 142–145 (NKMD).

Belongs to the TRAFAC class translation factor GTPase superfamily. Classic translation factor GTPase family. EF-G/EF-2 subfamily.

The protein localises to the cytoplasm. Functionally, catalyzes the GTP-dependent ribosomal translocation step during translation elongation. During this step, the ribosome changes from the pre-translocational (PRE) to the post-translocational (POST) state as the newly formed A-site-bound peptidyl-tRNA and P-site-bound deacylated tRNA move to the P and E sites, respectively. Catalyzes the coordinated movement of the two tRNA molecules, the mRNA and conformational changes in the ribosome. In Saccharophagus degradans (strain 2-40 / ATCC 43961 / DSM 17024), this protein is Elongation factor G 1.